Reading from the N-terminus, the 307-residue chain is MDINLDALVEANRRYTKEGHVATYIPALAKVNPDQLGVCIYDLKENKEFSAGEYDVRFAIESISKVPTLILAILDNGIEKVFSEVGTEPSGFAFNSIMNMQINHKNKPSNPFINAGAIKVVSLLKGKNDEERFKRILDFYRKIMNDDEITLDTEIYLSERETGDINRSLAYYMKGNGIMEGDVTDILDSYFKQCSVLVTAKDLARLGAVLANEGVMPWNGERLFSVETATVVKSLMTTYGLYDESGAFSVHIGLPSKSGVGGGILSSVPNKCGIGLFSPALDVSGNSVASMKLLKEIADKLKLDIFR.

The substrate site is built by S62, N114, E159, N166, Y190, Y242, and V260.

It belongs to the glutaminase family. As to quaternary structure, homotetramer.

It carries out the reaction L-glutamine + H2O = L-glutamate + NH4(+). The protein is Glutaminase 1 of Clostridium perfringens (strain 13 / Type A).